A 192-amino-acid polypeptide reads, in one-letter code: Signal peptidase complex catalytic subunit SEC11C (192 aa).

The Cytoplasmic portion of the chain corresponds to 1–28 (MVRAGAVGTHLPTSSLDIFGDLRKMNKR). The chain crosses the membrane as a helical; Signal-anchor for type II membrane protein span at residues 29–48 (QLYYQVLNFAMIVSSALMIW). Residues 49–192 (KGLIVLTGSE…GAYVLLKRES (144 aa)) are Lumenal-facing. Catalysis depends on charge relay system residues serine 68, histidine 108, and aspartate 134. Residues 177-188 (ALLAVMGAYVLL) form a C-terminal short (CTS) helix region.

It belongs to the peptidase S26B family. Component of the signal peptidase complex paralog C (SPC-C) composed of a catalytic subunit SEC11C and three accessory subunits SPCS1, SPCS2 and SPCS3. Within the complex, interacts with SPCS2 and SPCS3. The complex induces a local thinning of the ER membrane which is used to measure the length of the signal peptide (SP) h-region of protein substrates. This ensures the selectivity of the complex towards h-regions shorter than 18-20 amino acids. Post-translationally, may undergo processing at the N-terminus.

The protein resides in the endoplasmic reticulum membrane. The catalysed reaction is Cleavage of hydrophobic, N-terminal signal or leader sequences from secreted and periplasmic proteins.. Catalytic component of the signal peptidase complex (SPC) which catalyzes the cleavage of N-terminal signal sequences from nascent proteins as they are translocated into the lumen of the endoplasmic reticulum. Specifically cleaves N-terminal signal peptides that contain a hydrophobic alpha-helix (h-region) shorter than 18-20 amino acids. This Mus musculus (Mouse) protein is Signal peptidase complex catalytic subunit SEC11C (Sec11c).